We begin with the raw amino-acid sequence, 90 residues long: Probable Fe(2+)-trafficking protein (90 aa).

The protein belongs to the Fe(2+)-trafficking protein family.

In terms of biological role, could be a mediator in iron transactions between iron acquisition and iron-requiring processes, such as synthesis and/or repair of Fe-S clusters in biosynthetic enzymes. The sequence is that of Probable Fe(2+)-trafficking protein from Azotobacter vinelandii (strain DJ / ATCC BAA-1303).